A 1002-amino-acid polypeptide reads, in one-letter code: Leucine-rich repeat receptor-like serine/threonine-protein kinase BAM2 (1002 aa).

Residues 1-22 (MKLLLLLLLLLLLHISHSFTVA) form the signal peptide. Residues 23 to 636 (KPITELHALL…SHVKPLSATT (614 aa)) are Extracellular-facing. 7 N-linked (GlcNAc...) asparagine glycosylation sites follow: N51, N80, N97, N123, N130, N153, and N164. LRR repeat units lie at residues 68-92 (LRHV…VAHL), 93-116 (PLLQ…ISNL), 118-140 (ELRH…LSSG), 141-165 (LVNL…LTNL), 167-188 (QLRH…TYGT), 189-213 (WPVL…IGNL), 215-238 (TLRE…IGNL), 239-262 (SELV…IGKL), 263-285 (QKLD…ELGL), 286-309 (ISSL…SFSQ), 311-334 (KNLT…IGEM), 335-358 (PELE…LGEN), 359-382 (GRLV…MCSG), 384-406 (RLMT…LGKC), 407-430 (ESLT…LFGL), 431-456 (PKLS…GVSG), 458-479 (LGQI…IGNL), 480-503 (SGVQ…IGRL), 505-527 (QLSK…ISRC), 528-551 (KLLT…LTGM), 552-575 (KILN…IASM), and 577-600 (SLTS…QFSY). N-linked (GlcNAc...) asparagine glycans are attached at residues N212 and N237. Residues N312 and N346 are each glycosylated (N-linked (GlcNAc...) asparagine). An N-linked (GlcNAc...) asparagine glycan is attached at N420. N-linked (GlcNAc...) asparagine glycosylation occurs at N478. 3 N-linked (GlcNAc...) asparagine glycosylation sites follow: N558, N587, and N602. The helical transmembrane segment at 637–657 (KLLLVLGLLFCSMVFAIVAII) threads the bilayer. The Cytoplasmic segment spans residues 658-1002 (KARSLRNASE…SGSPPDLLSN (345 aa)). T682 carries the post-translational modification Phosphothreonine. The Protein kinase domain maps to 690-967 (LKEDNIIGKG…VQILTEIPKI (278 aa)). Residues 696 to 704 (IGKGGAGIV) and K718 contribute to the ATP site. A phosphotyrosine mark is found at Y765 and Y803. The active-site Proton acceptor is the D816. S851 is subject to Phosphoserine. Phosphotyrosine occurs at positions 859 and 866. T867 carries the phosphothreonine modification. Residues 969-1002 (LSKQQAAESDVTEKAPAINESSPDSGSPPDLLSN) are disordered. The span at 989–1002 (SSPDSGSPPDLLSN) shows a compositional bias: low complexity.

The protein belongs to the protein kinase superfamily. Ser/Thr protein kinase family. In terms of assembly, interacts with BAM1 and CLV1. Binds to the CLV3, CLE11, CLE18, CLE19, CLE22, CLE25, CLE26, CLE40, CLE41 and CLE42 mature peptides, probably via its extracellular leucine-rich repeat region. As to expression, expressed in seedlings, roots, rosette leaves, stems, inflorescences, flowers and siliques.

It localises to the cell membrane. The enzyme catalyses L-seryl-[protein] + ATP = O-phospho-L-seryl-[protein] + ADP + H(+). It catalyses the reaction L-threonyl-[protein] + ATP = O-phospho-L-threonyl-[protein] + ADP + H(+). Necessary for male gametophyte development, as well as ovule specification and function. Involved in cell-cell communication process required during early anther development, and regulating cell division and differentiation to organize cell layers. Required for the development of high-ordered vascular strands within the leaf and a correlated control of leaf shape, size and symmetry. May regulate the CLV1-dependent CLV3-mediated signaling in meristems maintenance. This Arabidopsis thaliana (Mouse-ear cress) protein is Leucine-rich repeat receptor-like serine/threonine-protein kinase BAM2 (BAM2).